The chain runs to 157 residues: Transcriptional repressor NrdR (157 aa).

The segment at 3–34 (CPFCRHPDSRVVDSRTSDDGLSIRRRRQCPEC) is a zinc-finger region. The 91-residue stretch at 46–136 (LSVIKRNGVV…VYQGFDSLDD (91 aa)) folds into the ATP-cone domain.

The protein belongs to the NrdR family. Zn(2+) is required as a cofactor.

Its function is as follows. Negatively regulates transcription of bacterial ribonucleotide reductase nrd genes and operons by binding to NrdR-boxes. The protein is Transcriptional repressor NrdR of Clavibacter sepedonicus (Clavibacter michiganensis subsp. sepedonicus).